The following is a 286-amino-acid chain: 2,3,4,5-tetrahydropyridine-2,6-dicarboxylate N-succinyltransferase (286 aa).

It belongs to the transferase hexapeptide repeat family.

It is found in the cytoplasm. The catalysed reaction is (S)-2,3,4,5-tetrahydrodipicolinate + succinyl-CoA + H2O = (S)-2-succinylamino-6-oxoheptanedioate + CoA. It participates in amino-acid biosynthesis; L-lysine biosynthesis via DAP pathway; LL-2,6-diaminopimelate from (S)-tetrahydrodipicolinate (succinylase route): step 1/3. This Rhizobium leguminosarum bv. trifolii (strain WSM2304) protein is 2,3,4,5-tetrahydropyridine-2,6-dicarboxylate N-succinyltransferase.